The chain runs to 241 residues: B9 domain-containing protein 1 (241 aa).

A disordered region spans residues 1–42; the sequence is MSASEGISLPGNEETTPPHEKHKQKAKKAKKKSRSAKESVPN. A compositionally biased stretch (basic residues) spans 20-34; that stretch reads EKHKQKAKKAKKKSR. Positions 53 to 197 constitute a C2 B9-type domain; the sequence is FSLSIVGQIV…TSWLLRREPE (145 aa).

This sequence belongs to the B9D family. In terms of assembly, probable component of the tectonic-like complex (also named MKS complex), composed of B9d1, B9d2, Cc2d2a, Mks1 and tctn. Expressed in type I sensory neurons (at protein level). Expressed in spermatids and spermatocytes (at protein level).

It is found in the cytoplasm. The protein resides in the cytoskeleton. The protein localises to the cilium basal body. Functionally, probable component of the tectonic-like complex (also named MKS complex), a complex localized at the transition zone of primary cilia. Required for ciliary structure and function. This chain is B9 domain-containing protein 1, found in Drosophila melanogaster (Fruit fly).